Here is a 150-residue protein sequence, read N- to C-terminus: Protein-export protein SecB (150 aa).

This sequence belongs to the SecB family. In terms of assembly, homotetramer, a dimer of dimers. One homotetramer interacts with 1 SecA dimer.

It localises to the cytoplasm. Functionally, one of the proteins required for the normal export of preproteins out of the cell cytoplasm. It is a molecular chaperone that binds to a subset of precursor proteins, maintaining them in a translocation-competent state. It also specifically binds to its receptor SecA. This is Protein-export protein SecB from Psychrobacter cryohalolentis (strain ATCC BAA-1226 / DSM 17306 / VKM B-2378 / K5).